A 179-amino-acid chain; its full sequence is Acireductone dioxygenase (179 aa).

His97, His99, Glu103, and His141 together coordinate Fe(2+). Ni(2+) contacts are provided by His97, His99, Glu103, and His141.

This sequence belongs to the acireductone dioxygenase (ARD) family. In terms of assembly, monomer. Fe(2+) is required as a cofactor. Requires Ni(2+) as cofactor.

The enzyme catalyses 1,2-dihydroxy-5-(methylsulfanyl)pent-1-en-3-one + O2 = 3-(methylsulfanyl)propanoate + CO + formate + 2 H(+). It carries out the reaction 1,2-dihydroxy-5-(methylsulfanyl)pent-1-en-3-one + O2 = 4-methylsulfanyl-2-oxobutanoate + formate + 2 H(+). It functions in the pathway amino-acid biosynthesis; L-methionine biosynthesis via salvage pathway; L-methionine from S-methyl-5-thio-alpha-D-ribose 1-phosphate: step 5/6. In terms of biological role, catalyzes 2 different reactions between oxygen and the acireductone 1,2-dihydroxy-3-keto-5-methylthiopentene (DHK-MTPene) depending upon the metal bound in the active site. Fe-containing acireductone dioxygenase (Fe-ARD) produces formate and 2-keto-4-methylthiobutyrate (KMTB), the alpha-ketoacid precursor of methionine in the methionine recycle pathway. Ni-containing acireductone dioxygenase (Ni-ARD) produces methylthiopropionate, carbon monoxide and formate, and does not lie on the methionine recycle pathway. The chain is Acireductone dioxygenase from Gluconacetobacter diazotrophicus (strain ATCC 49037 / DSM 5601 / CCUG 37298 / CIP 103539 / LMG 7603 / PAl5).